We begin with the raw amino-acid sequence, 362 residues long: Porin Omp2b (362 aa).

The signal sequence occupies residues 1 to 22 (MNIKSLLLGSAAALVAASGAQA).

The protein belongs to the alphaproteobacteria porin family. As to quaternary structure, homotrimer.

It localises to the cell outer membrane. Functionally, forms passive diffusion pores that allow small molecular weight hydrophilic materials across the outer membrane. The sequence is that of Porin Omp2b (omp2b) from Brucella suis biovar 1 (strain 1330).